Consider the following 212-residue polypeptide: Thymidylate kinase (212 aa).

10 to 17 (GPEGAGKT) provides a ligand contact to ATP.

The protein belongs to the thymidylate kinase family.

The catalysed reaction is dTMP + ATP = dTDP + ADP. In terms of biological role, phosphorylation of dTMP to form dTDP in both de novo and salvage pathways of dTTP synthesis. The sequence is that of Thymidylate kinase from Bacillus velezensis (strain DSM 23117 / BGSC 10A6 / LMG 26770 / FZB42) (Bacillus amyloliquefaciens subsp. plantarum).